The following is a 1142-amino-acid chain: Serine/threonine-protein kinase GIN4 (1142 aa).

The 271-residue stretch at 19-289 (WKLGETLGLG…TRDILKHPLL (271 aa)) folds into the Protein kinase domain. ATP contacts are provided by residues 25-33 (LGLGSTGKV) and Lys48. The Proton acceptor role is filled by Asp156. Disordered regions lie at residues 378 to 412 (KKRQSISSVSVSPSKKVSTTPQRRRNRESLISVTS) and 425 to 469 (ASSA…RNKR). Low complexity predominate over residues 382-395 (SISSVSVSPSKKVS). Phosphoserine is present on Ser406. Low complexity predominate over residues 425–440 (ASSASSSNLTTPGSSK). A compositionally biased stretch (basic residues) spans 441–452 (RLSKNFSSKKKL). Polar residues predominate over residues 454-465 (TIVNQSSPTPAS). A phosphoserine mark is found at Ser465, Ser471, Ser617, Ser689, Ser719, Ser805, Ser807, and Ser883. A disordered region spans residues 676–698 (DPGIMFSSPTEEVSPVEPKRTEN). Phosphothreonine is present on Thr884. The segment at 903-1031 (NEAKQTDNLH…NTAIGNGSFF (129 aa)) is disordered. Basic and acidic residues-rich tracts occupy residues 923-937 (NELRKQNSQEGDQAH), 962-984 (KEEKKPEQHKQEEDQEKREKVVD), and 996-1021 (KIREKNAGSQAKDHSKDHLKEHKQDK). The residue at position 930 (Ser930) is a Phosphoserine.

It belongs to the protein kinase superfamily. CAMK Ser/Thr protein kinase family. NIM1 subfamily. As to quaternary structure, component of the GIN4 complex composed of at least BNI5, CDC3, CDC10, CDC11, CDC12, GIN4, NAP1 and SHS1 which forms a ring at the bud neck.

The protein resides in the cytoplasm. It is found in the bud neck. It carries out the reaction L-seryl-[protein] + ATP = O-phospho-L-seryl-[protein] + ADP + H(+). The catalysed reaction is L-threonyl-[protein] + ATP = O-phospho-L-threonyl-[protein] + ADP + H(+). Serine/threonine-protein kinase which regulates the localization and the function of the septins during mitosis. Phosphorylates SHS1. This Saccharomyces cerevisiae (strain ATCC 204508 / S288c) (Baker's yeast) protein is Serine/threonine-protein kinase GIN4 (GIN4).